Reading from the N-terminus, the 327-residue chain is Tagatose 1,6-diphosphate aldolase 2 (327 aa).

This sequence belongs to the aldolase LacD family.

It catalyses the reaction D-tagatofuranose 1,6-bisphosphate = D-glyceraldehyde 3-phosphate + dihydroxyacetone phosphate. Its pathway is carbohydrate metabolism; D-tagatose 6-phosphate degradation; D-glyceraldehyde 3-phosphate and glycerone phosphate from D-tagatose 6-phosphate: step 2/2. The protein is Tagatose 1,6-diphosphate aldolase 2 (lacD2) of Streptococcus pyogenes serotype M1.